The sequence spans 111 residues: Small ribosomal subunit protein bS16 (111 aa).

The protein belongs to the bacterial ribosomal protein bS16 family.

The chain is Small ribosomal subunit protein bS16 from Rickettsia felis (strain ATCC VR-1525 / URRWXCal2) (Rickettsia azadi).